The chain runs to 349 residues: N-acetyl-gamma-glutamyl-phosphate reductase (349 aa).

The active site involves Cys149.

Belongs to the NAGSA dehydrogenase family. Type 1 subfamily.

It is found in the cytoplasm. It catalyses the reaction N-acetyl-L-glutamate 5-semialdehyde + phosphate + NADP(+) = N-acetyl-L-glutamyl 5-phosphate + NADPH + H(+). It participates in amino-acid biosynthesis; L-arginine biosynthesis; N(2)-acetyl-L-ornithine from L-glutamate: step 3/4. Functionally, catalyzes the NADPH-dependent reduction of N-acetyl-5-glutamyl phosphate to yield N-acetyl-L-glutamate 5-semialdehyde. In Acinetobacter baumannii (strain SDF), this protein is N-acetyl-gamma-glutamyl-phosphate reductase.